Reading from the N-terminus, the 151-residue chain is Transcriptional regulator MraZ (151 aa).

2 consecutive SpoVT-AbrB domains span residues 5-52 (ANAI…PLSE) and 81-124 (AVDL…DEDA).

This sequence belongs to the MraZ family. In terms of assembly, forms oligomers.

The protein resides in the cytoplasm. The protein localises to the nucleoid. In Pseudomonas savastanoi pv. phaseolicola (strain 1448A / Race 6) (Pseudomonas syringae pv. phaseolicola (strain 1448A / Race 6)), this protein is Transcriptional regulator MraZ.